A 95-amino-acid chain; its full sequence is Co-chaperonin GroES (95 aa).

Belongs to the GroES chaperonin family. In terms of assembly, heptamer of 7 subunits arranged in a ring. Interacts with the chaperonin GroEL.

The protein localises to the cytoplasm. In terms of biological role, together with the chaperonin GroEL, plays an essential role in assisting protein folding. The GroEL-GroES system forms a nano-cage that allows encapsulation of the non-native substrate proteins and provides a physical environment optimized to promote and accelerate protein folding. GroES binds to the apical surface of the GroEL ring, thereby capping the opening of the GroEL channel. In Alkalilimnicola ehrlichii (strain ATCC BAA-1101 / DSM 17681 / MLHE-1), this protein is Co-chaperonin GroES.